Reading from the N-terminus, the 916-residue chain is Isoleucine--tRNA ligase (916 aa).

The 'HIGH' region signature appears at 57-67 (PYANGNLHMGH). Glutamate 554 is an L-isoleucyl-5'-AMP binding site. The 'KMSKS' region signature appears at 595-599 (KMSKS). Residue lysine 598 participates in ATP binding. 4 residues coordinate Zn(2+): cysteine 885, cysteine 888, cysteine 905, and cysteine 908.

It belongs to the class-I aminoacyl-tRNA synthetase family. IleS type 1 subfamily. Monomer. The cofactor is Zn(2+).

Its subcellular location is the cytoplasm. The enzyme catalyses tRNA(Ile) + L-isoleucine + ATP = L-isoleucyl-tRNA(Ile) + AMP + diphosphate. Its function is as follows. Catalyzes the attachment of isoleucine to tRNA(Ile). As IleRS can inadvertently accommodate and process structurally similar amino acids such as valine, to avoid such errors it has two additional distinct tRNA(Ile)-dependent editing activities. One activity is designated as 'pretransfer' editing and involves the hydrolysis of activated Val-AMP. The other activity is designated 'posttransfer' editing and involves deacylation of mischarged Val-tRNA(Ile). The protein is Isoleucine--tRNA ligase (ileS) of Staphylococcus epidermidis (strain ATCC 35984 / DSM 28319 / BCRC 17069 / CCUG 31568 / BM 3577 / RP62A).